The chain runs to 269 residues: Eukaryotic translation initiation factor 3 subunit G-1 (269 aa).

Residues 188–266 form the RRM domain; that stretch reads AAIRISNLSE…LILSVEWSKP (79 aa).

Belongs to the eIF-3 subunit G family. In terms of assembly, component of the eukaryotic translation initiation factor 3 (eIF-3) complex. The eIF-3 complex interacts with pix.

Its subcellular location is the cytoplasm. Functionally, RNA-binding component of the eukaryotic translation initiation factor 3 (eIF-3) complex, which is involved in protein synthesis of a specialized repertoire of mRNAs and, together with other initiation factors, stimulates binding of mRNA and methionyl-tRNAi to the 40S ribosome. The eIF-3 complex specifically targets and initiates translation of a subset of mRNAs involved in cell proliferation. This subunit can bind 18S rRNA. The chain is Eukaryotic translation initiation factor 3 subunit G-1 from Drosophila virilis (Fruit fly).